The chain runs to 345 residues: Meiotically up-regulated gene 97 protein (345 aa).

2 helical membrane passes run 292–312 (MWVL…GLWM) and 319–329 (FAHGMLLNLGI).

The protein localises to the membrane. Functionally, required for correct meiotic chromosome segregation. Appears to also have role in sporulation. The chain is Meiotically up-regulated gene 97 protein (mug97) from Schizosaccharomyces pombe (strain 972 / ATCC 24843) (Fission yeast).